A 183-amino-acid chain; its full sequence is Peptide deformylase (183 aa).

2 residues coordinate Fe cation: Cys111 and His154. Glu155 is an active-site residue. His158 contributes to the Fe cation binding site.

It depends on Fe(2+) as a cofactor.

It catalyses the reaction N-terminal N-formyl-L-methionyl-[peptide] + H2O = N-terminal L-methionyl-[peptide] + formate. Its function is as follows. Removes the formyl group from the N-terminal Met of newly synthesized proteins. Requires at least a dipeptide for an efficient rate of reaction. N-terminal L-methionine is a prerequisite for activity but the enzyme has broad specificity at other positions. In Staphylococcus aureus, this protein is Peptide deformylase.